The sequence spans 90 residues: U7-theraphotoxin-Hhn1a 8 (90 aa).

An N-terminal signal peptide occupies residues 1–19 (MKTAIFTVVLALAVFAVLS). The propeptide occupies 20-50 (FGWEANEKALSEEFTELIHEKGAASETEARE). Intrachain disulfides connect Cys51–Cys65, Cys58–Cys70, and Cys64–Cys81.

Belongs to the neurotoxin 10 (Hwtx-1) family. 13 (Hntx-13) subfamily. Expressed by the venom gland.

It is found in the secreted. Its function is as follows. Ion channel inhibitor. The chain is U7-theraphotoxin-Hhn1a 8 from Cyriopagopus hainanus (Chinese bird spider).